The following is a 290-amino-acid chain: 4-hydroxy-tetrahydrodipicolinate synthase (290 aa).

Thr45 contributes to the pyruvate binding site. Residue Tyr133 is the Proton donor/acceptor of the active site. Lys161 (schiff-base intermediate with substrate) is an active-site residue. Position 202 (Ile202) interacts with pyruvate.

Belongs to the DapA family. In terms of assembly, homotetramer; dimer of dimers.

It is found in the cytoplasm. It catalyses the reaction L-aspartate 4-semialdehyde + pyruvate = (2S,4S)-4-hydroxy-2,3,4,5-tetrahydrodipicolinate + H2O + H(+). The protein operates within amino-acid biosynthesis; L-lysine biosynthesis via DAP pathway; (S)-tetrahydrodipicolinate from L-aspartate: step 3/4. Functionally, catalyzes the condensation of (S)-aspartate-beta-semialdehyde [(S)-ASA] and pyruvate to 4-hydroxy-tetrahydrodipicolinate (HTPA). The protein is 4-hydroxy-tetrahydrodipicolinate synthase of Alkalilimnicola ehrlichii (strain ATCC BAA-1101 / DSM 17681 / MLHE-1).